Consider the following 225-residue polypeptide: Small ribosomal subunit protein uS3 (225 aa).

The KH type-2 domain maps to 38–106 (LRGHLRKKLS…DVALNIVEIR (69 aa)).

This sequence belongs to the universal ribosomal protein uS3 family. In terms of assembly, part of the 30S ribosomal subunit. Forms a tight complex with proteins S10 and S14.

Functionally, binds the lower part of the 30S subunit head. Binds mRNA in the 70S ribosome, positioning it for translation. This chain is Small ribosomal subunit protein uS3, found in Granulibacter bethesdensis (strain ATCC BAA-1260 / CGDNIH1).